We begin with the raw amino-acid sequence, 1063 residues long: DNA-directed RNA polymerase subunit beta (1063 aa).

Belongs to the RNA polymerase beta chain family. In plastids the minimal PEP RNA polymerase catalytic core is composed of four subunits: alpha, beta, beta', and beta''. When a (nuclear-encoded) sigma factor is associated with the core the holoenzyme is formed, which can initiate transcription.

The protein localises to the plastid. It localises to the chloroplast. It catalyses the reaction RNA(n) + a ribonucleoside 5'-triphosphate = RNA(n+1) + diphosphate. Functionally, DNA-dependent RNA polymerase catalyzes the transcription of DNA into RNA using the four ribonucleoside triphosphates as substrates. The chain is DNA-directed RNA polymerase subunit beta from Zygnema circumcarinatum (Green alga).